The sequence spans 688 residues: Lipase (688 aa).

The signal sequence occupies residues 1–35 (MKTRQNKYSIRKFSVGASSILIAALLFMGGGSAQA). Positions 31–309 (GSAQAAEQQQ…KSAKQKQYKN (279 aa)) are disordered. Residues 36 to 302 (AEQQQDKGTV…KNEDQTNKSA (267 aa)) constitute a propeptide, removed in mature form. Positions 45–54 (VENSTTQSIG) are enriched in polar residues. Over residues 68 to 79 (NKNVNEKSNVNS) the composition is skewed to low complexity. Composition is skewed to basic and acidic residues over residues 84–95 (ESLHNETPKNED) and 103–143 (SQND…KHAS). The span at 144–172 (ENNQTLHSKAAQSNEDVKTKPSQLDNTAA) shows a compositional bias: polar residues. Over residues 173–183 (KQEDSQKENLS) the composition is skewed to basic and acidic residues. Over residues 184–211 (KQDTQSSKTTDLLRATAQNQSKDSQSTE) the composition is skewed to polar residues. Over residues 240 to 267 (SKEEPLKVDKQANPTTDKDKSSKNDKGS) the composition is skewed to basic and acidic residues. Residues 274–289 (LESNAVATTNKQSKQQ) show a composition bias toward polar residues. Serine 418 serves as the catalytic Nucleophile. Residue aspartate 609 is the Charge relay system of the active site. Aspartate 647 lines the Ca(2+) pocket. Catalysis depends on histidine 648, which acts as the Charge relay system. Ca(2+) is bound by residues aspartate 650, aspartate 655, and aspartate 658.

It belongs to the AB hydrolase superfamily. Lipase family.

The protein resides in the secreted. It carries out the reaction a triacylglycerol + H2O = a diacylglycerol + a fatty acid + H(+). The protein is Lipase (lip) of Staphylococcus epidermidis (strain ATCC 12228 / FDA PCI 1200).